The following is a 246-amino-acid chain: Small ribosomal subunit protein uS2 (246 aa).

This sequence belongs to the universal ribosomal protein uS2 family.

The polypeptide is Small ribosomal subunit protein uS2 (Burkholderia pseudomallei (strain 668)).